Reading from the N-terminus, the 756-residue chain is Nucleomorphin (756 aa).

The span at Met1 to Ser10 shows a compositional bias: polar residues. Residues Met1–Ser113 form a disordered region. Composition is skewed to low complexity over residues Asn16–Ser66 and Asn75–Asn94. Over residues Gly95–Ser113 the composition is skewed to polar residues. A BRCT domain is found at Leu124–Val216. 4 disordered regions span residues Asn229–Gln251, Pro272–Glu298, Lys359–Asn403, and Thr422–Leu463. Composition is skewed to low complexity over residues Leu285 to Glu298, Asn364 to Lys401, and Thr422 to Ser432. Over residues Lys448–His459 the composition is skewed to basic residues. Residues Lys464–Lys480 carry the Nuclear localization signal motif. The segment at Ala495–Lys512 is calmodulin binding. A compositionally biased stretch (polar residues) spans Ser514–Ile529. Residues Ser514–Glu587 are disordered. The segment covering Tyr536 to Glu587 has biased composition (acidic residues). The tract at residues Asp537–Asp588 is DEED region. Calmodulin binding regions lie at residues Val589 to Lys606 and Lys596 to His613. Disordered regions lie at residues His613–Arg639 and Leu660–Ile700. Polar residues predominate over residues Leu668 to Thr691.

As to quaternary structure, interacts with calmodulin and CBPD1 in the presence of Ca(2+).

The protein resides in the nucleus. The protein is Nucleomorphin (numA) of Dictyostelium discoideum (Social amoeba).